A 525-amino-acid chain; its full sequence is Bifunctional purine biosynthesis protein PurH (525 aa).

The MGS-like domain occupies 1-149 (MSDPVIKRAL…KNNESVTVVT (149 aa)).

The protein belongs to the PurH family.

The catalysed reaction is (6R)-10-formyltetrahydrofolate + 5-amino-1-(5-phospho-beta-D-ribosyl)imidazole-4-carboxamide = 5-formamido-1-(5-phospho-D-ribosyl)imidazole-4-carboxamide + (6S)-5,6,7,8-tetrahydrofolate. It catalyses the reaction IMP + H2O = 5-formamido-1-(5-phospho-D-ribosyl)imidazole-4-carboxamide. The protein operates within purine metabolism; IMP biosynthesis via de novo pathway; 5-formamido-1-(5-phospho-D-ribosyl)imidazole-4-carboxamide from 5-amino-1-(5-phospho-D-ribosyl)imidazole-4-carboxamide (10-formyl THF route): step 1/1. It participates in purine metabolism; IMP biosynthesis via de novo pathway; IMP from 5-formamido-1-(5-phospho-D-ribosyl)imidazole-4-carboxamide: step 1/1. The polypeptide is Bifunctional purine biosynthesis protein PurH (Prosthecochloris aestuarii (strain DSM 271 / SK 413)).